Consider the following 66-residue polypeptide: Large ribosomal subunit protein uL29 (66 aa).

It belongs to the universal ribosomal protein uL29 family.

In Fervidobacterium nodosum (strain ATCC 35602 / DSM 5306 / Rt17-B1), this protein is Large ribosomal subunit protein uL29.